Reading from the N-terminus, the 396-residue chain is CCA-adding enzyme (396 aa).

Residues Gly27 and Arg30 each contribute to the ATP site. CTP-binding residues include Gly27 and Arg30. 2 residues coordinate Mg(2+): Asp40 and Asp42. ATP is bound by residues Arg111, Asp154, Arg157, Arg160, and Arg163. Residues Arg111, Asp154, Arg157, Arg160, and Arg163 each coordinate CTP.

It belongs to the tRNA nucleotidyltransferase/poly(A) polymerase family. Bacterial CCA-adding enzyme type 3 subfamily. As to quaternary structure, homodimer. Mg(2+) is required as a cofactor.

It carries out the reaction a tRNA precursor + 2 CTP + ATP = a tRNA with a 3' CCA end + 3 diphosphate. The enzyme catalyses a tRNA with a 3' CCA end + 2 CTP + ATP = a tRNA with a 3' CCACCA end + 3 diphosphate. Functionally, catalyzes the addition and repair of the essential 3'-terminal CCA sequence in tRNAs without using a nucleic acid template. Adds these three nucleotides in the order of C, C, and A to the tRNA nucleotide-73, using CTP and ATP as substrates and producing inorganic pyrophosphate. tRNA 3'-terminal CCA addition is required both for tRNA processing and repair. Also involved in tRNA surveillance by mediating tandem CCA addition to generate a CCACCA at the 3' terminus of unstable tRNAs. While stable tRNAs receive only 3'-terminal CCA, unstable tRNAs are marked with CCACCA and rapidly degraded. The polypeptide is CCA-adding enzyme (Pediococcus pentosaceus (strain ATCC 25745 / CCUG 21536 / LMG 10740 / 183-1w)).